Reading from the N-terminus, the 51-residue chain is Large ribosomal subunit protein eL39 (51 aa).

This sequence belongs to the eukaryotic ribosomal protein eL39 family. Component of the large ribosomal subunit. Interacts with IMPACT.

It localises to the cytoplasm. Its function is as follows. RNA-binding component of the large ribosomal subunit. The ribosome is a large ribonucleoprotein complex responsible for the synthesis of proteins in the cell. The chain is Large ribosomal subunit protein eL39 (Rpl39) from Mus musculus (Mouse).